An 820-amino-acid chain; its full sequence is Phenylalanine--tRNA ligase beta subunit (820 aa).

Positions 42 to 154 constitute a tRNA-binding domain; that stretch reads KGGLEGLVIG…AEAVPGTLAK (113 aa). Positions 413–489 constitute a B5 domain; the sequence is PQDFMVELSY…RIYGYNNVEI (77 aa). The Mg(2+) site is built by Asp467, Asp473, Glu476, and Asp477. The 94-residue stretch at 727 to 820 folds into the FDX-ACB domain; that stretch reads SKFPAVKRDL…LEDKLNAKLR (94 aa).

It belongs to the phenylalanyl-tRNA synthetase beta subunit family. Type 1 subfamily. In terms of assembly, tetramer of two alpha and two beta subunits. Mg(2+) is required as a cofactor.

Its subcellular location is the cytoplasm. The catalysed reaction is tRNA(Phe) + L-phenylalanine + ATP = L-phenylalanyl-tRNA(Phe) + AMP + diphosphate + H(+). The chain is Phenylalanine--tRNA ligase beta subunit from Bacteroides thetaiotaomicron (strain ATCC 29148 / DSM 2079 / JCM 5827 / CCUG 10774 / NCTC 10582 / VPI-5482 / E50).